The following is a 591-amino-acid chain: Aspartate--tRNA(Asp/Asn) ligase (591 aa).

E174 contributes to the L-aspartate binding site. An aspartate region spans residues 198 to 201; it reads QLFK. Residue R220 coordinates L-aspartate. ATP contacts are provided by residues 220–222 and Q229; that span reads RDE. H450 is a binding site for L-aspartate. Position 483 (E483) interacts with ATP. R490 contacts L-aspartate. An ATP-binding site is contributed by 535-538; sequence GLDR.

It belongs to the class-II aminoacyl-tRNA synthetase family. Type 1 subfamily. In terms of assembly, homodimer.

It localises to the cytoplasm. It catalyses the reaction tRNA(Asx) + L-aspartate + ATP = L-aspartyl-tRNA(Asx) + AMP + diphosphate. Functionally, aspartyl-tRNA synthetase with relaxed tRNA specificity since it is able to aspartylate not only its cognate tRNA(Asp) but also tRNA(Asn). Reaction proceeds in two steps: L-aspartate is first activated by ATP to form Asp-AMP and then transferred to the acceptor end of tRNA(Asp/Asn). This is Aspartate--tRNA(Asp/Asn) ligase from Pseudomonas fluorescens (strain SBW25).